Here is a 459-residue protein sequence, read N- to C-terminus: Putrescine aminotransferase (459 aa).

Pyridoxal 5'-phosphate contacts are provided by residues 150 to 151 (GT) and Gln-274. Residue Lys-300 is modified to N6-(pyridoxal phosphate)lysine. Thr-332 contributes to the pyridoxal 5'-phosphate binding site.

Belongs to the class-III pyridoxal-phosphate-dependent aminotransferase family. Putrescine aminotransferase subfamily. Pyridoxal 5'-phosphate serves as cofactor.

The enzyme catalyses an alkane-alpha,omega-diamine + 2-oxoglutarate = an omega-aminoaldehyde + L-glutamate. The catalysed reaction is putrescine + 2-oxoglutarate = 1-pyrroline + L-glutamate + H2O. It catalyses the reaction cadaverine + 2-oxoglutarate = 5-aminopentanal + L-glutamate. It participates in amine and polyamine degradation; putrescine degradation; 4-aminobutanal from putrescine (transaminase route): step 1/1. Its function is as follows. Catalyzes the aminotransferase reaction from putrescine to 2-oxoglutarate, leading to glutamate and 4-aminobutanal, which spontaneously cyclizes to form 1-pyrroline. This is the first step in one of two pathways for putrescine degradation, where putrescine is converted into 4-aminobutanoate (gamma-aminobutyrate or GABA) via 4-aminobutanal. Also functions as a cadaverine transaminase in a a L-lysine degradation pathway to succinate that proceeds via cadaverine, glutarate and L-2-hydroxyglutarate. The protein is Putrescine aminotransferase of Salmonella paratyphi B (strain ATCC BAA-1250 / SPB7).